Reading from the N-terminus, the 204-residue chain is Holliday junction branch migration complex subunit RuvA (204 aa).

The interval 1–64 is domain I; it reads MIAQLKGSLA…EDAFLLYGFH (64 aa). The domain II stretch occupies residues 65 to 143; the sequence is SESQRKVFNL…ALPMAAPTTA (79 aa). The interval 144–154 is flexible linker; the sequence is IGAATMAANPA. The tract at residues 154–204 is domain III; the sequence is AGLREEVASALLNLGYKPPQVDAALAKLFSAGEITDISVALKGALKLLAPA.

It belongs to the RuvA family. As to quaternary structure, homotetramer. Forms an RuvA(8)-RuvB(12)-Holliday junction (HJ) complex. HJ DNA is sandwiched between 2 RuvA tetramers; dsDNA enters through RuvA and exits via RuvB. An RuvB hexamer assembles on each DNA strand where it exits the tetramer. Each RuvB hexamer is contacted by two RuvA subunits (via domain III) on 2 adjacent RuvB subunits; this complex drives branch migration. In the full resolvosome a probable DNA-RuvA(4)-RuvB(12)-RuvC(2) complex forms which resolves the HJ.

The protein resides in the cytoplasm. The RuvA-RuvB-RuvC complex processes Holliday junction (HJ) DNA during genetic recombination and DNA repair, while the RuvA-RuvB complex plays an important role in the rescue of blocked DNA replication forks via replication fork reversal (RFR). RuvA specifically binds to HJ cruciform DNA, conferring on it an open structure. The RuvB hexamer acts as an ATP-dependent pump, pulling dsDNA into and through the RuvAB complex. HJ branch migration allows RuvC to scan DNA until it finds its consensus sequence, where it cleaves and resolves the cruciform DNA. The polypeptide is Holliday junction branch migration complex subunit RuvA (Magnetococcus marinus (strain ATCC BAA-1437 / JCM 17883 / MC-1)).